A 136-amino-acid polypeptide reads, in one-letter code: Histone H3 (136 aa).

The interval 1 to 43 is disordered; sequence MARTKQTARKSTGGKAPRKQLASKAARKSAPSTGGVKKPHRYK. An N6,N6,N6-trimethyllysine; alternate mark is found at lysine 5 and lysine 10. At lysine 5 the chain carries N6,N6-dimethyllysine; alternate. Lysine 5 is subject to N6-methyllysine; alternate. An N6-acetyllysine; alternate modification is found at lysine 10. The residue at position 11 (serine 11) is a Phosphoserine. Lysine 15 carries the post-translational modification N6,N6-dimethyllysine; alternate. N6-methyllysine; alternate occurs at positions 15, 19, 24, 28, and 37. Lysine 15, lysine 19, lysine 24, lysine 28, and lysine 37 each carry N6-acetyllysine; alternate. Residues lysine 28 and lysine 37 each carry the N6,N6,N6-trimethyllysine; alternate modification. N6,N6-dimethyllysine; alternate occurs at positions 28 and 37. An N6-acetyllysine mark is found at lysine 57 and lysine 65. Position 80 is an N6,N6,N6-trimethyllysine; alternate (lysine 80). Lysine 80 carries the N6,N6-dimethyllysine; alternate modification. Position 80 is an N6-methyllysine; alternate (lysine 80).

This sequence belongs to the histone H3 family. The nucleosome is a histone octamer containing two molecules each of H2A, H2B, H3 and H4 assembled in one H3-H4 heterotetramer and two H2A-H2B heterodimers. The octamer wraps approximately 147 bp of DNA. Phosphorylated to form H3S10ph. H3S10ph promotes subsequent H3K14ac formation and is required for transcriptional activation through TBP recruitment to the promoters. In terms of processing, mono-, di- and trimethylated by the COMPASS complex to form H3K4me1/2/3. H3K4me activates gene expression by regulating transcription elongation and plays a role in telomere length maintenance. H3K4me enrichment correlates with transcription levels, and occurs in a 5' to 3' gradient with H3K4me3 enrichment at the 5'-end of genes, shifting to H3K4me2 and then H3K4me1. Trimethylated by methyltransferase dim-5 to form H3K9me3. H3K9me3, but not H3K9me2, marks chromatin regions for cytosine methylation. Methylated by set-2 to form H3K36me. H3K36me represses gene expression. Methylated by dot-1 to form H3K79me. H3K79me is required for association of SIR proteins with telomeric regions and for telomeric silencing. The COMPASS-mediated formation of H3K4me2/3 and the dot-1-mediated formation of H3K79me require H2BK123ub1. Post-translationally, acetylation of histone H3 leads to transcriptional activation. H3K14ac formation by gcn-5 is promoted by H3S10ph. H3K14ac can also be formed by esa-1. H3K56ac formation occurs predominantly in newly synthesized H3 molecules during G1, S and G2/M of the cell cycle and may be involved in DNA repair.

It is found in the nucleus. It localises to the chromosome. Core component of nucleosome. Nucleosomes wrap and compact DNA into chromatin, limiting DNA accessibility to the cellular machineries which require DNA as a template. Histones thereby play a central role in transcription regulation, DNA repair, DNA replication and chromosomal stability. DNA accessibility is regulated via a complex set of post-translational modifications of histones, also called histone code, and nucleosome remodeling. The polypeptide is Histone H3 (hh3) (Neurospora crassa (strain ATCC 24698 / 74-OR23-1A / CBS 708.71 / DSM 1257 / FGSC 987)).